A 259-amino-acid polypeptide reads, in one-letter code: MNILAPVRRDRVLAELPQCLKKEAALHVRKDFHPRVTCACQEHRTGTVGFKISKVIVVGDLSVGKTCLINRFCKDTFDKNYKATIGVDFEMERFEVLGVPFSLQLWDTAGQERFKCIASTYYRGAQAIIIVFNLNDVASLEHSKQWLADALKENDPSNVLLFLVGSKKDLSTPAQYSLMEKDALKVAQEIKAEYWSVSSLTGENVREFFFRVAALTFEANVLAELEKSGSRHIGDVVRINSDDKNLYLTASKKKATCCP.

Met1 carries the post-translational modification N-acetylmethionine. Ser62, Val63, Gly64, Lys65, Thr66, Asp78, Tyr81, and Thr84 together coordinate GTP. Thr66 contacts Mg(2+). The short motif at 71–89 (RFCKDTFDKNYKATIGVDF) is the Switch 1 element. Mg(2+)-binding residues include Thr84 and Asp107. The Switch 2 signature appears at 108-127 (TAGQERFKCIASTYYRGAQA). GTP-binding residues include Gly110, Lys167, Asp169, and Ser198. Ser241 bears the Phosphoserine mark. 2 S-geranylgeranyl cysteine lipidation sites follow: Cys257 and Cys258.

Belongs to the small GTPase superfamily. Rab family. As to quaternary structure, interacts with RILP. The GTP-bound form interacts with REP15. The cofactor is Mg(2+).

Its subcellular location is the cytoplasm. It localises to the golgi apparatus. It is found in the cytoplasmic vesicle. The protein localises to the phagosome. The protein resides in the phagosome membrane. Its subcellular location is the cell projection. It localises to the cilium. It is found in the cytoskeleton. The protein localises to the microtubule organizing center. The protein resides in the centrosome. Its subcellular location is the centriole. It catalyses the reaction GTP + H2O = GDP + phosphate + H(+). Regulated by guanine nucleotide exchange factors (GEFs) which promote the exchange of bound GDP for free GTP. Regulated by GTPase activating proteins (GAPs) which increase the GTP hydrolysis activity. Inhibited by GDP dissociation inhibitors (GDIs). The small GTPases Rab are key regulators of intracellular membrane trafficking, from the formation of transport vesicles to their fusion with membranes. Rabs cycle between an inactive GDP-bound form and an active GTP-bound form that is able to recruit to membranes different sets of downstream effectors directly responsible for vesicle formation, movement, tethering and fusion. RAB34 transports protein involved in the redistribution of lysosomes to the peri-Golgi region. Plays a role in the maturation of phagosomes that engulf pathogens, such as S.aureus and M.tuberculosis. Plays a role in the fusion of phagosomes with lysosomes. Involved in ciliogenesis. In particular, it is required for early steps of the intracellular cilium assembly pathway initiated by trafficking and docking of ciliary vesicles to the centrioles in the cytoplasm, followed by axoneme formation in the cytoplasm. After axoneme elongation, the centrioles migrate close to the cell surface so that ciliary vesicles can fuse with the plasma membrane to expose cilia to the extracellular space. It seems dispensable for ciliogenesis via the extracellular pathway where cilium assembly begins after migration and docking of the centriole to the plasma membrane. Also acts as a positive regulator of hedgehog signaling and regulates ciliary function. This Rattus norvegicus (Rat) protein is Ras-related protein Rab-34.